Consider the following 270-residue polypeptide: Cerberus (270 aa).

A signal peptide spans 1 to 20; the sequence is MLLNVLRICIIVCLVNDGAG. Residues N103, N112, and N154 are each glycosylated (N-linked (GlcNAc...) asparagine). Cystine bridges form between C169–C215, C183–C229, C193–C245, and C197–C247. In terms of domain architecture, CTCK spans 169 to 253; that stretch reads CKTLPFTQNI…ECTCEAHKSN (85 aa). Residue N228 is glycosylated (N-linked (GlcNAc...) asparagine).

This sequence belongs to the DAN family. The long chain interacts with nodal/nr-1, bmp4 and wnt8, thereby inhibiting their function. The short chain interacts with nodal/nr-1 but not bmp4 or wnt8. As to expression, a component of the Nieuwkoop signaling center in the blastula. Expressed transiently in a broad anterior domain of the gastrula, including the anterior endoderm of the Spemann's organizer and more laterally the cardiac primordia. Expression is excluded from the prospective prechordal plate region and the ring of cells that give rise to the trunk-tail mesoderm.

The protein resides in the secreted. Functionally, inhibits wnt, nodal/nr-1 and bmp signaling in the embryo to promote head formation and anterior neural induction. Within the endoderm, acts as an essential mediator of nodal/nr-1-induced cardiogenesis in the overlying mesoderm. The sequence is that of Cerberus from Xenopus laevis (African clawed frog).